We begin with the raw amino-acid sequence, 660 residues long: DNA mismatch repair protein MutL (660 aa).

The protein belongs to the DNA mismatch repair MutL/HexB family.

Its function is as follows. This protein is involved in the repair of mismatches in DNA. It is required for dam-dependent methyl-directed DNA mismatch repair. May act as a 'molecular matchmaker', a protein that promotes the formation of a stable complex between two or more DNA-binding proteins in an ATP-dependent manner without itself being part of a final effector complex. The chain is DNA mismatch repair protein MutL from Streptococcus pyogenes serotype M1.